The primary structure comprises 20 residues: Cytotoxin drCT-1 (20 aa).

It belongs to the three-finger toxin family. Short-chain subfamily. Type IA cytotoxin sub-subfamily. Monomer in solution; Homodimer and oligomer in the presence of negatively charged lipids forming a pore with a size ranging between 20 and 30 Angstroms. Expressed by the venom gland.

The protein resides in the secreted. The protein localises to the target cell membrane. Its function is as follows. This three-finger cytotoxin has antiproliferative, cytotoxic and apoptotic activities. Both in vivo and in vitro experimental results suggests that this protein possess anticancer potential. Also shows neurotoxicity, cardiotoxicity and myotoxicity. In Daboia russelii (Russel's viper), this protein is Cytotoxin drCT-1.